The following is a 184-amino-acid chain: MADTQTLLQNFGQVYDNPVLLDRSVTAPVTEGLNVLLASFQALYLQYQKHHFVVEGAEFYSLHEFFNSSYNEVQDHVHEIGERLNGLGGVPAASFSKLAELTCFEQESDGVYSSRKMVENDLAAEQAIINVIRRQAAQAESLGDRGTRYLYEKILLKTEERAYHLAHFLAKDSLTLGFVQPAQN.

Belongs to the Dps family. As to quaternary structure, hexamer.

In terms of biological role, involved in protection of chromosomal DNA from damage under nutrient-limited and oxidative stress conditions. Binds heme. This chain is Nutrient stress-induced DNA-binding protein (dpsA), found in Nostoc sp. (strain PCC 7120 / SAG 25.82 / UTEX 2576).